Consider the following 228-residue polypeptide: Protein Iojap, chloroplastic (228 aa).

The interval 1–54 (MGGTSAAVPSHGLACAPPAAVTLNPRARRRRASSGSGGHRSSPQQPLRSDLLPP) is disordered. The N-terminal 62 residues, 1–62 (MGGTSAAVPS…PPATVACRAR (62 aa)), are a transit peptide targeting the chloroplast.

Belongs to the Iojap/RsfS family. In terms of assembly, interacts with chloroplast ribosomal protein uL14c (rpl14).

Its subcellular location is the plastid. The protein resides in the chloroplast. Its function is as follows. May be a ribosome silencing factor (Potential). Involved in plastid biogenesis. Plastids affected by a mutation in Iojap lose the ability to perform translation and lack plastid ribosomes. This chain is Protein Iojap, chloroplastic (Ij), found in Zea mays (Maize).